The primary structure comprises 139 residues: Large ribosomal subunit protein uL16 (139 aa).

Over residues 1-17 (MLIPRKVKHRKQHHPGR) the composition is skewed to basic residues. Residues 1–24 (MLIPRKVKHRKQHHPGRTGHATGG) form a disordered region.

The protein belongs to the universal ribosomal protein uL16 family. Part of the 50S ribosomal subunit.

Functionally, binds 23S rRNA and is also seen to make contacts with the A and possibly P site tRNAs. The polypeptide is Large ribosomal subunit protein uL16 (Clavibacter michiganensis subsp. michiganensis (strain NCPPB 382)).